The sequence spans 93 residues: uncharacterized protein (93 aa).

Residues 36-69 (SEERLLSRLFEEMDELREAVEKEDWENLRDELLD) adopt a coiled-coil conformation.

This is an uncharacterized protein from Archaeoglobus fulgidus (strain ATCC 49558 / DSM 4304 / JCM 9628 / NBRC 100126 / VC-16).